Consider the following 724-residue polypeptide: Eukaryotic elongation factor 2 kinase (724 aa).

A2 is modified (N-acetylalanine). Residues 11 to 35 (EGVDGGGSSGAGRHGDSDTDSDDDE) are disordered. Positions 13–22 (VDGGGSSGAG) are enriched in gly residues. 4 positions are modified to phosphoserine: S18, S27, S70, and S73. The residue at position 77 (S77) is a Phosphoserine; by autocatalysis and TRPM7. The interval 80–93 (FKEAWKHAIEKAKH) is calmodulin-binding. One can recognise an Alpha-type protein kinase domain in the interval 115–325 (RYNAVTGEWL…ICQSMGLAPF (211 aa)). A Phosphoserine modification is found at S242. ATP is bound at residue 295-301 (GDGNLGV). At T347 the chain carries Phosphothreonine. Residue T352 is modified to Phosphothreonine; by autocatalysis. The interval 353-476 (EEKCGSPRIR…PESDEDSLGS (124 aa)) is disordered. S358 is modified (phosphoserine; by MAPK13 and CDK1). A compositionally biased stretch (low complexity) spans 364–376 (LSGSRPPLLLRLS). Residues S365 and S391 each carry the phosphoserine modification. The segment covering 385-403 (SDVTFDSLPSSPSSATPHS) has biased composition (polar residues). S397 is modified (phosphoserine; by AMPK). 2 stretches are compositionally biased toward basic and acidic residues: residues 421-435 (GPRD…RDSE) and 444-468 (SEKR…RRPE). Residues S434, S444, S469, S473, and S476 each carry the phosphoserine modification. Residue S499 is modified to Phosphoserine; by PKA.

Belongs to the protein kinase superfamily. Alpha-type protein kinase family. Monomer or homodimer. Interacts with Calmodulin/CALM1; this interaction is strictly required for phosphorylation activity. In terms of processing, the N-terminus is blocked. Post-translationally, autophosphorylated at multiple residues, Thr-347 being the major site. Phosphorylated by AMP-activated protein kinase AMPK at Ser-397 leading to EEF2K activation and protein synthesis inhibition. Phosphorylated by TRPM7 at Ser-77 resulting in improved protein stability, higher EE2F phosphorylated and subsequently reduced rate of protein synthesis. Phosphorylation by other kinases such as CDK1 and MAPK13 at Ser-358 or RPS6KA1 and RPS6KB1 at Ser-365 instead decrease EEF2K activity and promote protein synthesis. Widely expressed, with high levels in reticulocytes and skeletal muscle.

The catalysed reaction is [translation elongation factor 2] + ATP = [translation elongation factor 2]-phosphate + ADP + H(+). With respect to regulation, undergoes calcium/calmodulin-dependent intramolecular autophosphorylation, and this results in it becoming partially calcium/calmodulin-independent. Threonine kinase that regulates protein synthesis by controlling the rate of peptide chain elongation. Upon activation by a variety of upstream kinases including AMPK or TRPM7, phosphorylates the elongation factor EEF2 at a single site, renders it unable to bind ribosomes and thus inactive. In turn, the rate of protein synthesis is reduced. The protein is Eukaryotic elongation factor 2 kinase of Rattus norvegicus (Rat).